The following is a 117-amino-acid chain: Glycoprotein hormones alpha chain (117 aa).

A signal peptide spans 1–23; sequence MGSVKSAGLSLLLLSFLLYVADS. 5 cysteine pairs are disulfide-bonded: Cys-34–Cys-57, Cys-37–Cys-86, Cys-54–Cys-107, Cys-58–Cys-109, and Cys-85–Cys-112. Residues Asn-78 and Asn-103 are each glycosylated (N-linked (GlcNAc...) asparagine).

It belongs to the glycoprotein hormones subunit alpha family. Heterodimer. Glycoprotein hormones are heterodimers composed of a common alpha chain described here and a unique beta chain which confers their biological specificity to the different hormones.

It localises to the secreted. Functionally, shared alpha chain of heterodimeric glycoprotein hormones. These hormones bind specific receptors on target cells that in turn activate downstream signaling pathways. Involved in gametogenesis and steroidogenesis. This Acanthopagrus latus (Yellowfin seabream) protein is Glycoprotein hormones alpha chain (cga).